We begin with the raw amino-acid sequence, 279 residues long: Undecaprenyl-diphosphatase (279 aa).

Helical transmembrane passes span Thr-17–Phe-37, Ala-46–Leu-66, Phe-92–Leu-112, Ser-123–Val-143, Ile-156–Val-176, Ala-197–Tyr-217, Glu-226–Ile-246, and Ser-257–Val-277.

Belongs to the UppP family.

The protein resides in the cell inner membrane. It carries out the reaction di-trans,octa-cis-undecaprenyl diphosphate + H2O = di-trans,octa-cis-undecaprenyl phosphate + phosphate + H(+). Catalyzes the dephosphorylation of undecaprenyl diphosphate (UPP). Confers resistance to bacitracin. The polypeptide is Undecaprenyl-diphosphatase (Leptospira biflexa serovar Patoc (strain Patoc 1 / ATCC 23582 / Paris)).